Here is a 429-residue protein sequence, read N- to C-terminus: uncharacterized protein (429 aa).

Positions 1-12 (MSDSKEDIRNGQ) are enriched in basic and acidic residues. Disordered stretches follow at residues 1–63 (MSDS…APEA), 257–306 (RSRA…SDRM), and 320–429 (YRGY…SDSE). The segment covering 328–362 (EENEEDDLGDFIAEEEEEEEQEEEQEEDEEDEEEV) has biased composition (acidic residues). The span at 369–378 (KGFDADKEAS) shows a compositional bias: basic and acidic residues.

This sequence belongs to the LEO1 family.

It localises to the nucleus. This is an uncharacterized protein from Schizosaccharomyces pombe (strain 972 / ATCC 24843) (Fission yeast).